The following is a 1328-amino-acid chain: ABC transporter C family member 7 (1328 aa).

Residues His-104 to Ser-389 form the ABC transmembrane type-1 1 domain. The next 6 membrane-spanning stretches (helical) occupy residues Ile-112–Val-132, Ser-140–Ile-160, Leu-224–Ile-244, Gly-245–Leu-265, Ile-287–Ile-307, and Met-333–Ile-353. Residues Ile-457 to Lys-678 enclose the ABC transporter 1 domain. ATP is bound at residue Gly-490–Ser-497. The span at Leu-684 to Asn-695 shows a compositional bias: low complexity. Positions Leu-684–Lys-708 are disordered. 5 consecutive transmembrane segments (helical) span residues Phe-762–Phe-782, Asp-802–Ile-822, Val-894–Phe-914, Ile-988–Leu-1008, and Gly-1014–Ile-1034. Residues Phe-765–Ser-1046 form the ABC transmembrane type-1 2 domain. The 234-residue stretch at Ile-1083–Lys-1316 folds into the ABC transporter 2 domain. Gly-1117–Ser-1124 contributes to the ATP binding site.

This sequence belongs to the ABC transporter superfamily. ABCC family. Conjugate transporter (TC 3.A.1.208) subfamily.

It localises to the membrane. This chain is ABC transporter C family member 7 (abcC7), found in Dictyostelium discoideum (Social amoeba).